We begin with the raw amino-acid sequence, 488 residues long: Glutamyl-tRNA(Gln) amidotransferase subunit B, mitochondrial (488 aa).

Belongs to the GatB/GatE family. GatB subfamily. Subunit of the heterotrimeric GatFAB amidotransferase (AdT) complex, composed of A, B and F subunits.

It localises to the mitochondrion. It carries out the reaction L-glutamyl-tRNA(Gln) + L-glutamine + ATP + H2O = L-glutaminyl-tRNA(Gln) + L-glutamate + ADP + phosphate + H(+). Allows the formation of correctly charged Gln-tRNA(Gln) through the transamidation of misacylated Glu-tRNA(Gln) in the mitochondria. The reaction takes place in the presence of glutamine and ATP through an activated gamma-phospho-Glu-tRNA(Gln). The polypeptide is Glutamyl-tRNA(Gln) amidotransferase subunit B, mitochondrial (Candida albicans (strain WO-1) (Yeast)).